A 215-amino-acid polypeptide reads, in one-letter code: Cytochrome b6 (215 aa).

A helical transmembrane segment spans residues 32 to 52 (IFYCLGGITLTCFLVQVATGF). Cys35 lines the heme c pocket. Heme b-binding residues include His86 and His100. A run of 3 helical transmembrane segments spans residues 90–110 (ASMM…TGGF), 116–136 (LTWV…VTGY), and 186–206 (LHTF…FPMI). His187 and His202 together coordinate heme b.

It belongs to the cytochrome b family. PetB subfamily. In terms of assembly, the 4 large subunits of the cytochrome b6-f complex are cytochrome b6, subunit IV (17 kDa polypeptide, PetD), cytochrome f and the Rieske protein, while the 4 small subunits are PetG, PetL, PetM and PetN. The complex functions as a dimer. Requires heme b as cofactor. Heme c is required as a cofactor.

The protein resides in the plastid. The protein localises to the chloroplast thylakoid membrane. Component of the cytochrome b6-f complex, which mediates electron transfer between photosystem II (PSII) and photosystem I (PSI), cyclic electron flow around PSI, and state transitions. The protein is Cytochrome b6 of Populus alba (White poplar).